A 342-amino-acid chain; its full sequence is MAEHDYHEDYGFNSFNDSSQEEHQDFLQFSKVFLPCMYLVVFVCGLVGNSLVLVISIFYHKLQSLTDVFLVNLPLADLVFVCTLPFWAYAGIHEWVFGQVMCKSLLGIYTINFYTSMLILTCITVDRFIVVVKATKAYNQQAKRMTWGKVTSLLIWVISLLVSLPQIIYGNVFNLDKLICGYHDEAISTVVLATQMTLGFFLPLLTMIVCYSVIIKTLLHAGGFQKHRSLKIIFLVMAVFLLTQMPFNLMKLIRSTHWEYYAMTSFHYTIMVTEAIAYLRACLNPVLYAFVSLKFRKNFWKLVKDIGCLPYLGVSHQWKSSEDNSKTFSASHNVEATSMFQL.

Residues Met1–Val32 are Extracellular-facing. The N-linked (GlcNAc...) asparagine glycan is linked to Asn16. A helical transmembrane segment spans residues Phe33–Tyr59. The Cytoplasmic segment spans residues His60–Val68. A helical membrane pass occupies residues Phe69–Tyr89. Topologically, residues Ala90–Lys103 are extracellular. Cys102 and Cys180 are oxidised to a cystine. The helical transmembrane segment at Ser104–Val125 threads the bilayer. Residues Asp126–Lys143 lie on the Cytoplasmic side of the membrane. Residues Arg144 to Leu164 form a helical membrane-spanning segment. Residues Pro165–Ile187 lie on the Extracellular side of the membrane. Residues Ser188–Ile215 form a helical membrane-spanning segment. Topologically, residues Lys216 to Lys231 are cytoplasmic. The helical transmembrane segment at Ile232–Glu259 threads the bilayer. Residues Tyr260–Ala275 are Extracellular-facing. Residues Ile276 to Leu293 form a helical membrane-spanning segment. Residues Lys294–Leu342 are Cytoplasmic-facing.

The protein belongs to the G-protein coupled receptor 1 family.

Its subcellular location is the cell membrane. In terms of biological role, receptor for the C-X-C chemokine CXCL16. Used as a coreceptor by SIVs and by strains of HIV-2 and m-tropic HIV-1. The sequence is that of C-X-C chemokine receptor type 6 (CXCR6) from Pan troglodytes (Chimpanzee).